A 683-amino-acid polypeptide reads, in one-letter code: Methionine--tRNA ligase (683 aa).

Positions 15–25 (PYANGPIHLGH) match the 'HIGH' region motif. 4 residues coordinate Zn(2+): C146, C149, C159, and C162. Residues 332-336 (KMSKS) carry the 'KMSKS' region motif. An ATP-binding site is contributed by K335. In terms of domain architecture, tRNA-binding spans 582–683 (DFAKIDLRIA…EGALPGMRVK (102 aa)).

The protein belongs to the class-I aminoacyl-tRNA synthetase family. MetG type 1 subfamily. In terms of assembly, homodimer. The cofactor is Zn(2+).

Its subcellular location is the cytoplasm. The enzyme catalyses tRNA(Met) + L-methionine + ATP = L-methionyl-tRNA(Met) + AMP + diphosphate. Is required not only for elongation of protein synthesis but also for the initiation of all mRNA translation through initiator tRNA(fMet) aminoacylation. The sequence is that of Methionine--tRNA ligase from Shewanella frigidimarina (strain NCIMB 400).